Here is a 145-residue protein sequence, read N- to C-terminus: Large ribosomal subunit protein uL11 (145 aa).

Belongs to the universal ribosomal protein uL11 family. In terms of assembly, part of the ribosomal stalk of the 50S ribosomal subunit. Interacts with L10 and the large rRNA to form the base of the stalk. L10 forms an elongated spine to which L12 dimers bind in a sequential fashion forming a multimeric L10(L12)X complex. Post-translationally, one or more lysine residues are methylated.

Forms part of the ribosomal stalk which helps the ribosome interact with GTP-bound translation factors. This is Large ribosomal subunit protein uL11 from Rickettsia akari (strain Hartford).